A 94-amino-acid chain; its full sequence is Large ribosomal subunit protein bL27 (94 aa).

A propeptide spanning residues 1–9 (MLKLNLQFF) is cleaved from the precursor. Residues 12-32 (KKGVSSTKNGRDSESKRLGAK) form a disordered region. The span at 20–32 (NGRDSESKRLGAK) shows a compositional bias: basic and acidic residues.

It belongs to the bacterial ribosomal protein bL27 family. In terms of processing, the N-terminus is cleaved by ribosomal processing cysteine protease Prp.

The polypeptide is Large ribosomal subunit protein bL27 (Staphylococcus carnosus (strain TM300)).